Here is a 728-residue protein sequence, read N- to C-terminus: Methylmalonyl-CoA mutase large subunit (728 aa).

Tyr-75, Met-78, Arg-82, Thr-85, Arg-87, Tyr-89, and Ser-114 together coordinate (R)-methylmalonyl-CoA. 2 residues coordinate cob(II)alamin: Phe-117 and Ala-139. 2 residues coordinate (R)-methylmalonyl-CoA: Thr-195 and Gln-197. 2 residues coordinate cob(II)alamin: Val-206 and Arg-207. Positions 207, 244, 283, and 285 each coordinate (R)-methylmalonyl-CoA. Cob(II)alamin contacts are provided by Gly-333, Glu-370, Ala-373, Gly-609, His-610, Asp-611, Arg-612, Ser-655, Leu-657, Gly-686, and Thr-709. The 132-residue stretch at 597–728 (RPRILLAKMG…VKKLRASLDA (132 aa)) folds into the B12-binding domain.

The protein belongs to the methylmalonyl-CoA mutase family. In terms of assembly, heterodimer of an alpha and a beta chain. The cofactor is adenosylcob(III)alamin.

The enzyme catalyses (R)-methylmalonyl-CoA = succinyl-CoA. In terms of biological role, catalyzes the reversible conversion of succinyl-CoA to (R)-methylmalonyl-CoA through a radical mechanism. Is involved in the fermentation of pyruvate to propanoate that occurs in Propionibacteria. This Propionibacterium freudenreichii subsp. shermanii protein is Methylmalonyl-CoA mutase large subunit (mutB).